The primary structure comprises 117 residues: Cytochrome c6 (117 aa).

Positions 1–24 (MKKLLAIALTVLATVFAFGTPAFA) are cleaved as a signal peptide. Heme c is bound by residues cysteine 38, cysteine 41, histidine 42, and methionine 89.

It belongs to the cytochrome c family. PetJ subfamily. In terms of assembly, monomer. Post-translationally, binds 1 heme c group covalently per subunit.

It localises to the cellular thylakoid lumen. Its function is as follows. Functions as an electron carrier between membrane-bound cytochrome b6-f and photosystem I in oxygenic photosynthesis. This Picosynechococcus sp. (strain ATCC 27264 / PCC 7002 / PR-6) (Agmenellum quadruplicatum) protein is Cytochrome c6 (petJ).